A 768-amino-acid polypeptide reads, in one-letter code: Solute carrier family 45 member 4 (768 aa).

The disordered stretch occupies residues 1–32; sequence MKMAPQNADPESMQVQELSVPLPDPQKAGGAE. Helical transmembrane passes span 63-83, 86-106, 123-143, 155-175, 196-216, and 233-253; these read EFCY…IGLP, YYSL…PLIG, ILAL…GSAI, PIGI…ADAT, LNIH…LGGL, and VLFF…LFSI. Disordered stretches follow at residues 259–284 and 379–419; these read SPQQ…PAFP and NEAK…RHAF. 2 positions are modified to phosphoserine: S424 and S454. Positions 460-489 are disordered; that stretch reads DMQKRQRQHRHRNQSGATTSSGDTESEEGE. Over residues 473 to 482 the composition is skewed to low complexity; sequence QSGATTSSGD. Residue S485 is modified to Phosphoserine. The next 6 membrane-spanning stretches (helical) occupy residues 518-538, 560-580, 592-612, 614-634, 666-686, and 695-715; these read TWFS…QVIF, MGCW…ALLQ, VIYV…AMFP, VYVA…ISYC, ILSC…GGVV, and IPMV…FLVI. Residues 726 to 768 form a disordered region; it reads EQKGLSSPLAGEGRAGGNSEKPTVLKLTRKEGLQGPVETESVV. Phosphoserine is present on S732.

The protein belongs to the glycoside-pentoside-hexuronide (GPH) cation symporter transporter (TC 2.A.2) family.

The protein resides in the membrane. The catalysed reaction is sucrose(out) + H(+)(out) = sucrose(in) + H(+)(in). In terms of biological role, proton-associated sucrose transporter. May be able to transport also glucose and fructose. The chain is Solute carrier family 45 member 4 from Homo sapiens (Human).